The following is a 405-amino-acid chain: Replication factor C large subunit (405 aa).

47-54 (GPPGVGKT) lines the ATP pocket.

It belongs to the activator 1 small subunits family. RfcL subfamily. In terms of assembly, heteromultimer composed of small subunits (RfcS) and large subunits (RfcL).

Its function is as follows. Part of the RFC clamp loader complex which loads the PCNA sliding clamp onto DNA. The chain is Replication factor C large subunit from Saccharolobus islandicus (strain M.16.4 / Kamchatka #3) (Sulfolobus islandicus).